A 459-amino-acid polypeptide reads, in one-letter code: Elongation factor 1-alpha 4 (459 aa).

In terms of domain architecture, tr-type G spans 5–242; that stretch reads KTHINIVVIG…DCIIPPQRPT (238 aa). Positions 14–21 are G1; that stretch reads GHVDSGKS. Residues 70-74 form a G2 region; it reads GITID. Positions 91–94 are G3; the sequence is DAPG. Positions 153–156 are G4; the sequence is NKMD. The G5 stretch occupies residues 194–196; that stretch reads SGF. 5-glutamyl glycerylphosphorylethanolamine occurs at positions 301 and 374.

This sequence belongs to the TRAFAC class translation factor GTPase superfamily. Classic translation factor GTPase family. EF-Tu/EF-1A subfamily.

The protein resides in the cytoplasm. Its function is as follows. This protein promotes the GTP-dependent binding of aminoacyl-tRNA to the A-site of ribosomes during protein biosynthesis. This is Elongation factor 1-alpha 4 (eft-4) from Oscheius tipulae.